Reading from the N-terminus, the 325-residue chain is ATP phosphoribosyltransferase (325 aa).

Belongs to the ATP phosphoribosyltransferase family. Long subfamily. Mg(2+) is required as a cofactor.

The protein localises to the cytoplasm. It carries out the reaction 1-(5-phospho-beta-D-ribosyl)-ATP + diphosphate = 5-phospho-alpha-D-ribose 1-diphosphate + ATP. Its pathway is amino-acid biosynthesis; L-histidine biosynthesis; L-histidine from 5-phospho-alpha-D-ribose 1-diphosphate: step 1/9. Feedback inhibited by histidine. In terms of biological role, catalyzes the condensation of ATP and 5-phosphoribose 1-diphosphate to form N'-(5'-phosphoribosyl)-ATP (PR-ATP). Has a crucial role in the pathway because the rate of histidine biosynthesis seems to be controlled primarily by regulation of HisG enzymatic activity. The chain is ATP phosphoribosyltransferase from Rhodopseudomonas palustris (strain BisA53).